A 379-amino-acid chain; its full sequence is Cytochrome b (379 aa).

Helical transmembrane passes span Phe33–Met53, Trp77–Ile98, Trp113–Leu133, and Phe178–Leu198. Positions 83 and 97 each coordinate heme b. Heme b is bound by residues His182 and His196. A ubiquinone is bound at residue His201. 4 consecutive transmembrane segments (helical) span residues Tyr226–Tyr246, Leu288–His308, Ala320–Gly340, and Tyr347–Pro367.

The protein belongs to the cytochrome b family. As to quaternary structure, the cytochrome bc1 complex contains 3 respiratory subunits (MT-CYB, CYC1 and UQCRFS1), 2 core proteins (UQCRC1 and UQCRC2) and probably 6 low-molecular weight proteins. The cofactor is heme b.

Its subcellular location is the mitochondrion inner membrane. Functionally, component of the ubiquinol-cytochrome c reductase complex (complex III or cytochrome b-c1 complex) that is part of the mitochondrial respiratory chain. The b-c1 complex mediates electron transfer from ubiquinol to cytochrome c. Contributes to the generation of a proton gradient across the mitochondrial membrane that is then used for ATP synthesis. The sequence is that of Cytochrome b (mt-cyb) from Anguilla dieffenbachii (New Zealand longfin eel).